A 248-amino-acid chain; its full sequence is MRLLKTEAIVLKNNLIGETDKIATLFTKSYGKLQAVAKGARRSKSRFVNAIRPFVVANYVIFEGQNYYYIDQWELIEAHKNIEKDLAKFSVASYIAETINKILEENQKSERLYLFLKHSLKAVDELQIDPLIFISSYNLKLVSLLGYMPQLDNCVVCGKRENLKYFSNSCGGAVCINCKNKCFDAKPLHEVTLKAIKYFLKGDYDKLQNIKVSGVIKEEVDKIITAYMKEHLEIEFKSKDFINNLQNM.

This sequence belongs to the RecO family.

Functionally, involved in DNA repair and RecF pathway recombination. The sequence is that of DNA repair protein RecO from Thermoanaerobacter sp. (strain X514).